A 180-amino-acid polypeptide reads, in one-letter code: Large ribosomal subunit protein uL5 (180 aa).

This sequence belongs to the universal ribosomal protein uL5 family. As to quaternary structure, part of the 50S ribosomal subunit; part of the 5S rRNA/L5/L18/L25 subcomplex. Contacts the 5S rRNA and the P site tRNA. Forms a bridge to the 30S subunit in the 70S ribosome.

This is one of the proteins that bind and probably mediate the attachment of the 5S RNA into the large ribosomal subunit, where it forms part of the central protuberance. In the 70S ribosome it contacts protein S13 of the 30S subunit (bridge B1b), connecting the 2 subunits; this bridge is implicated in subunit movement. Contacts the P site tRNA; the 5S rRNA and some of its associated proteins might help stabilize positioning of ribosome-bound tRNAs. The protein is Large ribosomal subunit protein uL5 of Pediococcus pentosaceus (strain ATCC 25745 / CCUG 21536 / LMG 10740 / 183-1w).